Reading from the N-terminus, the 1435-residue chain is Trafficking protein particle complex subunit 8 (1435 aa).

Phosphoserine is present on residues Ser273, Ser279, and Ser309. Residues 301–321 form a disordered region; the sequence is QLEQSSDPSNSIDGPDHLRSA. The segment covering 302–312 has biased composition (polar residues); sequence LEQSSDPSNSI.

This sequence belongs to the TRS85 family. As to quaternary structure, component of the multisubunit TRAPP (transport protein particle) complex, which includes TRAPPC2, TRAPPC2L, TRAPPC3, TRAPPC3L, TRAPPC4, TRAPPC5, TRAPPC8, TRAPPC9, TRAPPC10, TRAPPC11 and TRAPPC12. Interacts with TBC1D14. Interacts (via C-terminus) with TMEM131 (via C-terminus); the interaction is direct and is involved in collagen secretion.

It localises to the golgi apparatus. The protein resides in the cis-Golgi network. Plays a role in endoplasmic reticulum to Golgi apparatus trafficking at a very early stage. Maintains together with TBC1D14 the cycling pool of ATG9 required for initiation of autophagy. Involved in collagen secretion. This chain is Trafficking protein particle complex subunit 8 (TRAPPC8), found in Homo sapiens (Human).